A 229-amino-acid chain; its full sequence is Non-structural protein V (229 aa).

Positions L28–T115 are disordered. The segment covering K45–T55 has biased composition (basic and acidic residues). The span at S59 to P71 shows a compositional bias: low complexity. 2 stretches are compositionally biased toward polar residues: residues G82–Q97 and S105–T115. Zn(2+) is bound by residues H178, C197, C201, C213, C215, C218, C222, and C225.

Belongs to the paramyxoviruses V protein family.

Blocks host interferon signaling. In Human parainfluenza 4b virus (strain 68-333) (HPIV-4b), this protein is Non-structural protein V (P/V).